A 195-amino-acid polypeptide reads, in one-letter code: Probable GTP-binding protein EngB (195 aa).

The EngB-type G domain occupies 22–195 (QLPEIALAGR…WSALSRYIKR (174 aa)). GTP contacts are provided by residues 30 to 37 (GRSNVGKS), 57 to 61 (GKTQT), 75 to 78 (DVPG), 142 to 145 (TKLD), and 174 to 176 (FSA). 2 residues coordinate Mg(2+): Ser-37 and Thr-59.

The protein belongs to the TRAFAC class TrmE-Era-EngA-EngB-Septin-like GTPase superfamily. EngB GTPase family. It depends on Mg(2+) as a cofactor.

Functionally, necessary for normal cell division and for the maintenance of normal septation. This is Probable GTP-binding protein EngB from Oceanobacillus iheyensis (strain DSM 14371 / CIP 107618 / JCM 11309 / KCTC 3954 / HTE831).